Here is a 186-residue protein sequence, read N- to C-terminus: Shikimate kinase (186 aa).

Gly-15–Thr-20 is an ATP binding site. Position 19 (Thr-19) interacts with Mg(2+). Residues Asp-37, Arg-61, and Gly-83 each contribute to the substrate site. Arg-121 is an ATP binding site. Arg-140 lines the substrate pocket.

This sequence belongs to the shikimate kinase family. As to quaternary structure, monomer. It depends on Mg(2+) as a cofactor.

The protein resides in the cytoplasm. The enzyme catalyses shikimate + ATP = 3-phosphoshikimate + ADP + H(+). It functions in the pathway metabolic intermediate biosynthesis; chorismate biosynthesis; chorismate from D-erythrose 4-phosphate and phosphoenolpyruvate: step 5/7. In terms of biological role, catalyzes the specific phosphorylation of the 3-hydroxyl group of shikimic acid using ATP as a cosubstrate. In Psychrobacter cryohalolentis (strain ATCC BAA-1226 / DSM 17306 / VKM B-2378 / K5), this protein is Shikimate kinase.